The primary structure comprises 266 residues: ES1 protein homolog, mitochondrial (266 aa).

The transit peptide at 1–39 directs the protein to the mitochondrion; that stretch reads MAAVRVLVSPRLASALLPLSGRHRTTSQRAAIHSSAPRP. K149, K155, and K162 each carry N6-acetyllysine. K201 is subject to N6-acetyllysine; alternate. K201 bears the N6-succinyllysine; alternate mark. At K217 the chain carries N6-acetyllysine. N6-acetyllysine; alternate occurs at positions 221 and 231. N6-succinyllysine; alternate occurs at positions 221 and 231.

The protein belongs to the ES1 family.

It is found in the mitochondrion. The chain is ES1 protein homolog, mitochondrial from Rattus norvegicus (Rat).